We begin with the raw amino-acid sequence, 616 residues long: Sulfite reductase [NADPH] flavoprotein alpha-component (616 aa).

Residues 80-218 (LTIIFASQTG…SAAQWRKQAL (139 aa)) form the Flavodoxin-like domain. FMN-binding positions include 86–91 (SQTGNA), 133–136 (STNG), and 169–178 (LGDSSYEFFC). In terms of domain architecture, FAD-binding FR-type spans 251–465 (QKPYAATLLT…VENNNNFKLP (215 aa)). Residues threonine 339, glycine 373, 403–406 (RLYS), 421–423 (TVG), tyrosine 427, and 436–439 (GGAS) contribute to the FAD site. NADP(+) is bound by residues 536–537 (SR), 542–546 (KVYVQ), and aspartate 578. Tyrosine 616 lines the FAD pocket.

It belongs to the NADPH-dependent sulphite reductase flavoprotein subunit CysJ family. The protein in the N-terminal section; belongs to the flavodoxin family. This sequence in the C-terminal section; belongs to the flavoprotein pyridine nucleotide cytochrome reductase family. Alpha(8)-beta(8). The alpha component is a flavoprotein, the beta component is a hemoprotein. FAD is required as a cofactor. Requires FMN as cofactor.

The enzyme catalyses hydrogen sulfide + 3 NADP(+) + 3 H2O = sulfite + 3 NADPH + 4 H(+). The protein operates within sulfur metabolism; hydrogen sulfide biosynthesis; hydrogen sulfide from sulfite (NADPH route): step 1/1. In terms of biological role, component of the sulfite reductase complex that catalyzes the 6-electron reduction of sulfite to sulfide. This is one of several activities required for the biosynthesis of L-cysteine from sulfate. The flavoprotein component catalyzes the electron flow from NADPH -&gt; FAD -&gt; FMN to the hemoprotein component. The polypeptide is Sulfite reductase [NADPH] flavoprotein alpha-component (Vibrio vulnificus (strain CMCP6)).